A 228-amino-acid chain; its full sequence is MKIKEMVTSEMPRERLLSHGAKSLSNTELLAILINTGRKGFSSIDISNELLKSASNLNELKKSSINDLIKVKGIGLQKAITLKAAFELGERMGRRAENNRIKITQPSDVADYMIPTMKDLTQEHFVILLLNSKNVVIKETCVFKGTLNSSIVHPREIFSIAVRENANAIIAVHNHPSGDVTPSQEDIITTMRLKECGLILGIDLLDHIIIGDNRFTSLVEAGYFDEND.

The 123-residue stretch at K102–F224 folds into the MPN domain. Positions 173, 175, and 186 each coordinate Zn(2+). Residues H173–D186 carry the JAMM motif motif.

This sequence belongs to the UPF0758 family.

This is UPF0758 protein MW1604 from Staphylococcus aureus (strain MW2).